The chain runs to 156 residues: Small ribosomal subunit protein uS7 (156 aa).

Belongs to the universal ribosomal protein uS7 family. As to quaternary structure, part of the 30S ribosomal subunit. Contacts proteins S9 and S11.

In terms of biological role, one of the primary rRNA binding proteins, it binds directly to 16S rRNA where it nucleates assembly of the head domain of the 30S subunit. Is located at the subunit interface close to the decoding center, probably blocks exit of the E-site tRNA. This is Small ribosomal subunit protein uS7 from Prochlorococcus marinus (strain MIT 9301).